Here is a 112-residue protein sequence, read N- to C-terminus: Class I hydrophobin 7 (112 aa).

Residues 1-23 form the signal peptide; sequence MFARQATSVSAFLVLTLSLFAAA. Cystine bridges form between cysteine 36-cysteine 93, cysteine 43-cysteine 87, cysteine 44-cysteine 74, and cysteine 94-cysteine 107. Asparagine 96 is a glycosylation site (N-linked (GlcNAc...) asparagine).

This sequence belongs to the fungal hydrophobin family. Self-assembles to form functional amyloid fibrils called rodlets. Self-assembly into fibrillar rodlets occurs spontaneously at hydrophobic:hydrophilic interfaces and the rodlets further associate laterally to form amphipathic monolayers.

It is found in the secreted. It localises to the cell wall. Aerial growth, conidiation, and dispersal of filamentous fungi in the environment rely upon a capability of their secreting small amphipathic proteins called hydrophobins (HPBs) with low sequence identity. Class I can self-assemble into an outermost layer of rodlet bundles on aerial cell surfaces, conferring cellular hydrophobicity that supports fungal growth, development and dispersal; whereas Class II form highly ordered films at water-air interfaces through intermolecular interactions but contribute nothing to the rodlet structure. The chain is Class I hydrophobin 7 from Flammulina velutipes (Agaricus velutipes).